The following is a 347-amino-acid chain: Elongation factor Ts (347 aa).

Residues 80–83 (TDFV) form an involved in Mg(2+) ion dislocation from EF-Tu region.

Belongs to the EF-Ts family.

It is found in the cytoplasm. In terms of biological role, associates with the EF-Tu.GDP complex and induces the exchange of GDP to GTP. It remains bound to the aminoacyl-tRNA.EF-Tu.GTP complex up to the GTP hydrolysis stage on the ribosome. The chain is Elongation factor Ts from Streptococcus sanguinis (strain SK36).